The sequence spans 351 residues: C(7)-cyclitol 7-kinase (351 aa).

The protein belongs to the ROK (NagC/XylR) family.

It catalyses the reaction valienone + ATP = valienone 7-phosphate + ADP + H(+). It carries out the reaction validone + ATP = validone 7-phosphate + ADP + H(+). Its function is as follows. Involved in the biosynthesis of the antifungal agent validamycin A. Catalyzes the phosphorylation of valienone and validone to their 7-phosphate derivatives. This is C(7)-cyclitol 7-kinase from Streptomyces hygroscopicus subsp. jinggangensis (strain 5008).